Reading from the N-terminus, the 104-residue chain is Pyrimidine/purine nucleoside phosphorylase (104 aa).

It belongs to the nucleoside phosphorylase PpnP family.

The catalysed reaction is a purine D-ribonucleoside + phosphate = a purine nucleobase + alpha-D-ribose 1-phosphate. The enzyme catalyses adenosine + phosphate = alpha-D-ribose 1-phosphate + adenine. It catalyses the reaction cytidine + phosphate = cytosine + alpha-D-ribose 1-phosphate. It carries out the reaction guanosine + phosphate = alpha-D-ribose 1-phosphate + guanine. The catalysed reaction is inosine + phosphate = alpha-D-ribose 1-phosphate + hypoxanthine. The enzyme catalyses thymidine + phosphate = 2-deoxy-alpha-D-ribose 1-phosphate + thymine. It catalyses the reaction uridine + phosphate = alpha-D-ribose 1-phosphate + uracil. It carries out the reaction xanthosine + phosphate = alpha-D-ribose 1-phosphate + xanthine. Its function is as follows. Catalyzes the phosphorolysis of diverse nucleosides, yielding D-ribose 1-phosphate and the respective free bases. Can use uridine, adenosine, guanosine, cytidine, thymidine, inosine and xanthosine as substrates. Also catalyzes the reverse reactions. The polypeptide is Pyrimidine/purine nucleoside phosphorylase (Geobacter sulfurreducens (strain ATCC 51573 / DSM 12127 / PCA)).